A 199-amino-acid polypeptide reads, in one-letter code: TATA-box-binding protein (199 aa).

2 repeat units span residues 10–86 (IENI…VKLL) and 101–177 (IQNI…YNQL).

It belongs to the TBP family.

In terms of biological role, general factor that plays a role in the activation of archaeal genes transcribed by RNA polymerase. Binds specifically to the TATA box promoter element which lies close to the position of transcription initiation. The chain is TATA-box-binding protein from Pyrobaculum aerophilum (strain ATCC 51768 / DSM 7523 / JCM 9630 / CIP 104966 / NBRC 100827 / IM2).